A 246-amino-acid chain; its full sequence is Predicted GPI-anchored protein 33 (246 aa).

The N-terminal stretch at 1–16 (MRGIILLSFVLTSCLA) is a signal peptide. An N-linked (GlcNAc...) asparagine glycan is attached at Asn214. The GPI-anchor amidated asparagine moiety is linked to residue Asn219. A propeptide spans 220–246 (AAGVYSTNSVLVFVSICIGFIGGSLGI) (removed in mature form).

It localises to the cell membrane. This chain is Predicted GPI-anchored protein 33 (PGA33), found in Candida albicans (strain SC5314 / ATCC MYA-2876) (Yeast).